We begin with the raw amino-acid sequence, 610 residues long: Menin (610 aa).

An interaction with FANCD2 region spans residues 214-390 (GVAERSWLYL…SLLEAGEERP (177 aa)). 2 disordered regions span residues 385 to 404 (AGEE…GSAL) and 460 to 552 (REAE…PVLT). Over residues 393 to 402 (QTQGTQSQGS) the composition is skewed to low complexity. The segment covering 484–500 (RRESKPEEPPPPKKPAL) has biased composition (basic and acidic residues). The residue at position 487 (Ser-487) is a Phosphoserine. Pro residues-rich tracts occupy residues 512 to 521 (PGPPRKPPGT) and 537 to 548 (VPAPAASPPPEG). Phosphoserine is present on Ser-543. The residue at position 594 (Thr-594) is a Phosphothreonine.

As to quaternary structure, component of the MLL-HCF complex, at least composed of KMT2A/MLL1, MEN1, ASH2L, RBBP5, DPY30, WDR5, HCFC1 and HCFC2. Component of the menin-associated histone methyltransferase complex, at least composed of KMT2B/MLL4, MEN1, ASH2L, RBBP5, DPY30 and WDR5. Interacts with POLR2B. Interacts with POLR2A phosphorylated at 'Ser-5', but not with the unphosphorylated, nor 'Ser-2' phosphorylated POLR2A forms. Interacts with FANCD2 and DBF4. Interacts with SMAD3, but not with SMAD2, nor SMAD4. Directly interacts with NFKB1, NFKB2 and RELA. Interacts with JUND (via MBM motif); inhibits the interaction of JUND with MAPK10 and the phosphorylation of JUND by MAP kinases MAPK8 and MAPK10. Interacts with KMT2A (via MBM motif). The KMT2A-MEN1 complex interacts with PSIP1 with a greater affinity as MEN1 enhances interaction of KMT2A with PSIP1.

It localises to the nucleus. Essential component of a MLL/SET1 histone methyltransferase (HMT) complex, a complex that specifically methylates 'Lys-4' of histone H3 (H3K4). Functions as a transcriptional regulator. Binds to the TERT promoter and represses telomerase expression. Plays a role in TGFB1-mediated inhibition of cell-proliferation, possibly regulating SMAD3 transcriptional activity. Represses JUND-mediated transcriptional activation on AP1 sites, as well as that mediated by NFKB subunit RELA. Positively regulates HOXC8 and HOXC6 gene expression. May be involved in normal hematopoiesis through the activation of HOXA9 expression. May be involved in DNA repair. The polypeptide is Menin (MEN1) (Bos taurus (Bovine)).